A 565-amino-acid chain; its full sequence is Amino-acid acetyltransferase, mitochondrial (565 aa).

The disordered stretch occupies residues 38-58 (DIATATPAATPSDGAQPPAQN). The N-acetyltransferase domain occupies 352-540 (LPVRVLRSME…EFGGGRLVRV (189 aa)).

It belongs to the acetyltransferase family.

The protein resides in the mitochondrion. It catalyses the reaction L-glutamate + acetyl-CoA = N-acetyl-L-glutamate + CoA + H(+). It participates in amino-acid biosynthesis; L-arginine biosynthesis; N(2)-acetyl-L-ornithine from L-glutamate: step 1/4. Functionally, N-acetylglutamate synthase involved in arginine biosynthesis. The sequence is that of Amino-acid acetyltransferase, mitochondrial (ARG2) from Cryptococcus neoformans var. neoformans serotype D (strain B-3501A) (Filobasidiella neoformans).